A 373-amino-acid chain; its full sequence is Mannan endo-1,4-beta-mannosidase A (373 aa).

An N-terminal signal peptide occupies residues 1 to 17 (MKGLFAFGLGLLSLVNA). Substrate is bound by residues Trp-81, Asn-193, and 194–196 (EPR). Glu-194 (proton donor/acceptor) is an active-site residue. Cys-197 and Cys-200 are joined by a disulfide. Substrate is bound by residues Glu-230, Tyr-267, and Trp-271. A disulfide bridge links Cys-289 with Cys-296. Catalysis depends on Glu-300, which acts as the Nucleophile. A disulfide bond links Cys-308 and Cys-359. Trp-332 lines the substrate pocket.

This sequence belongs to the glycosyl hydrolase 5 (cellulase A) family. In terms of assembly, monomer. In terms of processing, not glycosylated.

Its subcellular location is the secreted. The catalysed reaction is Random hydrolysis of (1-&gt;4)-beta-D-mannosidic linkages in mannans, galactomannans and glucomannans.. In terms of biological role, endo-1,4-mannanase that catalyzes the random hydrolysis of (1-&gt;4)-beta-D-mannosidic linkages in mannans and heteromannans. It is a crucial enzyme for depolymerization of seed galactomannans and wood galactoglucomannans. Hydrolyzes structurally different mannan polysaccharides, such as galactomannans, glucomannans, and beta-1,4-mannans from different sources, yielding principally mannobiose. Also has transglycosylation activity. The polypeptide is Mannan endo-1,4-beta-mannosidase A (Podospora anserina (strain S / ATCC MYA-4624 / DSM 980 / FGSC 10383) (Pleurage anserina)).